Here is a 1236-residue protein sequence, read N- to C-terminus: ESX-4 secretion system protein EccC4 (1236 aa).

Helical transmembrane passes span 32 to 52 and 59 to 79; these read LLPVVMSVATVGVMVTVFLPG and PTFLAFPMMMLVSLVVTAVTG. FtsK domains follow at residues 407–607, 747–936, and 1018–1201; these read GTAV…SESR, RVPL…ADSE, and GQPV…DEGA. Residues 430-437, 765-772, and 1035-1042 each bind ATP; these read GATGSGKS, GAPQTGKS, and GDNECGKT.

Part of the ESX-4 / type VII secretion system (T7SS), which is composed of cytosolic and membrane components.

Its subcellular location is the cell membrane. The chain is ESX-4 secretion system protein EccC4 (eccC4) from Mycobacterium tuberculosis (strain ATCC 25618 / H37Rv).